Reading from the N-terminus, the 661-residue chain is Translation factor GUF1 homolog, mitochondrial (661 aa).

One can recognise a tr-type G domain in the interval 59–242; sequence ENIRNFCIVA…AIIDRIPSPK (184 aa). GTP is bound by residues 68 to 75, 135 to 139, and 189 to 192; these read AHVDHGKS, DTPGH, and NKVD.

Belongs to the TRAFAC class translation factor GTPase superfamily. Classic translation factor GTPase family. LepA subfamily.

The protein localises to the mitochondrion inner membrane. It catalyses the reaction GTP + H2O = GDP + phosphate + H(+). Its function is as follows. Promotes mitochondrial protein synthesis. May act as a fidelity factor of the translation reaction, by catalyzing a one-codon backward translocation of tRNAs on improperly translocated ribosomes. Binds to mitochondrial ribosomes in a GTP-dependent manner. The protein is Translation factor GUF1 homolog, mitochondrial of Ixodes scapularis (Black-legged tick).